A 238-amino-acid chain; its full sequence is Uridylate kinase (238 aa).

10 to 13 contacts ATP; the sequence is KFSG. The segment at 18 to 23 is involved in allosteric activation by GTP; it reads GDSGFG. A UMP-binding site is contributed by glycine 52. Residues glycine 53 and arginine 57 each contribute to the ATP site. UMP contacts are provided by residues aspartate 73 and 134–141; that span reads TGNPFFTT. Positions 161, 167, and 170 each coordinate ATP.

This sequence belongs to the UMP kinase family. In terms of assembly, homohexamer.

The protein localises to the cytoplasm. The catalysed reaction is UMP + ATP = UDP + ADP. The protein operates within pyrimidine metabolism; CTP biosynthesis via de novo pathway; UDP from UMP (UMPK route): step 1/1. Its activity is regulated as follows. Allosterically activated by GTP. Inhibited by UTP. In terms of biological role, catalyzes the reversible phosphorylation of UMP to UDP. This chain is Uridylate kinase, found in Campylobacter curvus (strain 525.92).